The following is a 201-amino-acid chain: dTTP/UTP pyrophosphatase (201 aa).

The active-site Proton acceptor is the Asp-81.

This sequence belongs to the Maf family. YhdE subfamily. A divalent metal cation serves as cofactor.

Its subcellular location is the cytoplasm. It carries out the reaction dTTP + H2O = dTMP + diphosphate + H(+). The catalysed reaction is UTP + H2O = UMP + diphosphate + H(+). Its function is as follows. Nucleoside triphosphate pyrophosphatase that hydrolyzes dTTP and UTP. May have a dual role in cell division arrest and in preventing the incorporation of modified nucleotides into cellular nucleic acids. The polypeptide is dTTP/UTP pyrophosphatase (Bordetella avium (strain 197N)).